The sequence spans 407 residues: uncharacterized protein (407 aa).

The region spanning 1–250 (MLDPLDILTN…LERDVLKQRL (250 aa)) is the EAL domain.

This is an uncharacterized protein from Bacillus subtilis (strain 168).